A 346-amino-acid chain; its full sequence is Holliday junction branch migration complex subunit RuvB (346 aa).

The interval 1 to 181 is large ATPase domain (RuvB-L); sequence MSDRNPLIDA…FGIPTRLNFY (181 aa). Residues Leu20, Arg21, Gly62, Lys65, Thr66, Thr67, 128 to 130, Arg171, Tyr181, and Arg218 each bind ATP; that span reads EDF. Residue Thr66 coordinates Mg(2+). The interval 182 to 252 is small ATPAse domain (RuvB-S); sequence TVEELEYIVR…IADEALSRLE (71 aa). Positions 255–346 are head domain (RuvB-H); the sequence is NRGLDQLDRR…SQYGLFMEDE (92 aa). Positions 291, 310, and 315 each coordinate DNA.

It belongs to the RuvB family. Homohexamer. Forms an RuvA(8)-RuvB(12)-Holliday junction (HJ) complex. HJ DNA is sandwiched between 2 RuvA tetramers; dsDNA enters through RuvA and exits via RuvB. An RuvB hexamer assembles on each DNA strand where it exits the tetramer. Each RuvB hexamer is contacted by two RuvA subunits (via domain III) on 2 adjacent RuvB subunits; this complex drives branch migration. In the full resolvosome a probable DNA-RuvA(4)-RuvB(12)-RuvC(2) complex forms which resolves the HJ.

The protein resides in the cytoplasm. It carries out the reaction ATP + H2O = ADP + phosphate + H(+). Its function is as follows. The RuvA-RuvB-RuvC complex processes Holliday junction (HJ) DNA during genetic recombination and DNA repair, while the RuvA-RuvB complex plays an important role in the rescue of blocked DNA replication forks via replication fork reversal (RFR). RuvA specifically binds to HJ cruciform DNA, conferring on it an open structure. The RuvB hexamer acts as an ATP-dependent pump, pulling dsDNA into and through the RuvAB complex. RuvB forms 2 homohexamers on either side of HJ DNA bound by 1 or 2 RuvA tetramers; 4 subunits per hexamer contact DNA at a time. Coordinated motions by a converter formed by DNA-disengaged RuvB subunits stimulates ATP hydrolysis and nucleotide exchange. Immobilization of the converter enables RuvB to convert the ATP-contained energy into a lever motion, pulling 2 nucleotides of DNA out of the RuvA tetramer per ATP hydrolyzed, thus driving DNA branch migration. The RuvB motors rotate together with the DNA substrate, which together with the progressing nucleotide cycle form the mechanistic basis for DNA recombination by continuous HJ branch migration. Branch migration allows RuvC to scan DNA until it finds its consensus sequence, where it cleaves and resolves cruciform DNA. The protein is Holliday junction branch migration complex subunit RuvB of Brucella anthropi (strain ATCC 49188 / DSM 6882 / CCUG 24695 / JCM 21032 / LMG 3331 / NBRC 15819 / NCTC 12168 / Alc 37) (Ochrobactrum anthropi).